A 168-amino-acid chain; its full sequence is NADH-quinone oxidoreductase subunit B (168 aa).

Residues Cys-37, Cys-38, Cys-103, and Cys-132 each contribute to the [4Fe-4S] cluster site.

Belongs to the complex I 20 kDa subunit family. NDH-1 is composed of 14 different subunits. Subunits NuoB, C, D, E, F, and G constitute the peripheral sector of the complex. [4Fe-4S] cluster serves as cofactor.

The protein localises to the cell inner membrane. The catalysed reaction is a quinone + NADH + 5 H(+)(in) = a quinol + NAD(+) + 4 H(+)(out). In terms of biological role, NDH-1 shuttles electrons from NADH, via FMN and iron-sulfur (Fe-S) centers, to quinones in the respiratory chain. The immediate electron acceptor for the enzyme in this species is believed to be ubiquinone. Couples the redox reaction to proton translocation (for every two electrons transferred, four hydrogen ions are translocated across the cytoplasmic membrane), and thus conserves the redox energy in a proton gradient. This chain is NADH-quinone oxidoreductase subunit B, found in Campylobacter fetus subsp. fetus (strain 82-40).